Consider the following 590-residue polypeptide: V-type ATP synthase alpha chain (590 aa).

Residue 231–238 (GPFGSGKT) participates in ATP binding.

It belongs to the ATPase alpha/beta chains family.

The catalysed reaction is ATP + H2O + 4 H(+)(in) = ADP + phosphate + 5 H(+)(out). In terms of biological role, produces ATP from ADP in the presence of a proton gradient across the membrane. The V-type alpha chain is a catalytic subunit. The protein is V-type ATP synthase alpha chain of Clostridium botulinum (strain ATCC 19397 / Type A).